A 666-amino-acid chain; its full sequence is Endogenous retrovirus group K member 24 Gag polyprotein (666 aa).

Gly2 carries N-myristoyl glycine lipidation. The tract at residues 165–264 (GKGPELVGPS…APPSRQGSEL (100 aa)) is disordered. Positions 232–247 (GMPPAPQGRAPYPQPP) are enriched in pro residues. 2 consecutive CCHC-type zinc fingers follow at residues 544-561 (GKCY…NCPV) and 580-597 (DLCP…QCRS). The tract at residues 598–641 (KFDKNGQPLSGNEQRGQPQAPQQTGAFPIQPFVPQGFQGQQPPL) is disordered. The span at 604-622 (QPLSGNEQRGQPQAPQQTG) shows a compositional bias: polar residues. The span at 624–640 (FPIQPFVPQGFQGQQPP) shows a compositional bias: low complexity.

It belongs to the beta type-B retroviral Gag protein family. HERV class-II K(HML-2) gag subfamily. Post-translationally, myristoylation is essential for retroviral assembly. Alteration of the glycine residue leads to a block in the budding of particles and an accumulation of Gag inside the cell. In terms of processing, specific enzymatic cleavages may yield mature proteins.

The protein localises to the cell membrane. The products of the Gag polyproteins of infectious retroviruses perform highly complex orchestrated tasks during the assembly, budding, maturation, and infection stages of the viral replication cycle. During viral assembly, the proteins form membrane associations and self-associations that ultimately result in budding of an immature virion from the infected cell. Gag precursors also function during viral assembly to selectively bind and package two plus strands of genomic RNA. Endogenous Gag proteins may have kept, lost or modified their original function during evolution. In Homo sapiens (Human), this protein is Endogenous retrovirus group K member 24 Gag polyprotein (ERVK-24).